The chain runs to 1060 residues: Protocadherin-1 (1060 aa).

The signal sequence occupies residues 1–57; that stretch reads MDSGAGGRRCPEAALLILGPPRMEHLRHSPGPGGQRLLLPSMLLALLLLLAPSPGHA. 7 Cadherin domains span residues 58 to 168, 169 to 280, 281 to 387, 396 to 506, 507 to 612, 613 to 715, and 718 to 844; these read TRVV…TPNF, ASPV…APKF, ERPS…APTI, THQD…APVF, TQSV…DPKF, MLSG…APYI, and PSNT…DPEY. The Extracellular segment spans residues 58–852; sequence TRVVYKVPEE…EYERSKQRGN (795 aa). 2 N-linked (GlcNAc...) asparagine glycosylation sites follow: Asn305 and Asn403. N-linked (GlcNAc...) asparagine glycosylation is found at Asn618, Asn662, Asn813, and Asn818. The chain crosses the membrane as a helical span at residues 853 to 873; sequence ILFGVVAGVVAVALLIALAVL. At 874-1060 the chain is on the cytoplasmic side; the sequence is VRYCRQREAK…HGAIWTEVWE (187 aa). Over residues 884–897 the composition is skewed to basic and acidic residues; sequence SGYQAGKKETKDLY. The tract at residues 884 to 1045 is disordered; the sequence is SGYQAGKKET…QPFQLSTPQP (162 aa). Residues 907 to 920 show a composition bias toward basic residues; that stretch reads KGNKSKGKKSKSPK. Phosphoserine occurs at positions 918, 949, 962, and 984. Residues 973–986 show a composition bias toward low complexity; sequence SPLPSIQLQPQSPS. 2 stretches are compositionally biased toward polar residues: residues 1003 to 1024 and 1033 to 1043; these read FVGT…SYRT and QVGQPFQLSTP.

As to expression, highly expressed in the brain and neuro-glial cells.

The protein localises to the cell junction. It is found in the cell membrane. Its function is as follows. May be involved in cell-cell interaction processes and in cell adhesion. The sequence is that of Protocadherin-1 (PCDH1) from Homo sapiens (Human).